The primary structure comprises 263 residues: Glutamate/glutamine/aspartate/asparagine transport ATP-binding protein BztD (263 aa).

Positions 23–257 (IQISQMNKWY…PQSERTKQFL (235 aa)) constitute an ABC transporter domain. Residue 55–62 (GPSGSGKS) coordinates ATP.

This sequence belongs to the ABC transporter superfamily. BztB and BztC form a heterodimer which can form a membrane complex with a homodimer of BztD.

Its subcellular location is the cell membrane. Functionally, part of a binding-protein-dependent transport system for glutamate, glutamine, aspartate, asparagine. Probably responsible for energy coupling to the transport system. In Rhodobacter capsulatus (strain ATCC BAA-309 / NBRC 16581 / SB1003), this protein is Glutamate/glutamine/aspartate/asparagine transport ATP-binding protein BztD (bztD).